A 164-amino-acid chain; its full sequence is Phosphopantetheine adenylyltransferase (164 aa).

Ser-11 provides a ligand contact to substrate. ATP is bound by residues 11-12 (SF) and His-19. Residues Lys-43, Ala-76, and Arg-90 each coordinate substrate. ATP-binding positions include 91-93 (GLR), Glu-101, and 126-132 (YQHISSS).

This sequence belongs to the bacterial CoaD family. In terms of assembly, homohexamer. It depends on Mg(2+) as a cofactor.

Its subcellular location is the cytoplasm. The enzyme catalyses (R)-4'-phosphopantetheine + ATP + H(+) = 3'-dephospho-CoA + diphosphate. Its pathway is cofactor biosynthesis; coenzyme A biosynthesis; CoA from (R)-pantothenate: step 4/5. Functionally, reversibly transfers an adenylyl group from ATP to 4'-phosphopantetheine, yielding dephospho-CoA (dPCoA) and pyrophosphate. This is Phosphopantetheine adenylyltransferase from Streptococcus sanguinis (strain SK36).